We begin with the raw amino-acid sequence, 505 residues long: ATP synthase subunit alpha (505 aa).

Residue 170 to 177 (GDRQTGKT) participates in ATP binding.

This sequence belongs to the ATPase alpha/beta chains family. As to quaternary structure, F-type ATPases have 2 components, CF(1) - the catalytic core - and CF(0) - the membrane proton channel. CF(1) has five subunits: alpha(3), beta(3), gamma(1), delta(1), epsilon(1). CF(0) has four main subunits: a, b, b' and c.

The protein localises to the cellular thylakoid membrane. It catalyses the reaction ATP + H2O + 4 H(+)(in) = ADP + phosphate + 5 H(+)(out). Functionally, produces ATP from ADP in the presence of a proton gradient across the membrane. The alpha chain is a regulatory subunit. In Cyanothece sp. (strain PCC 7425 / ATCC 29141), this protein is ATP synthase subunit alpha.